Reading from the N-terminus, the 514-residue chain is CBL-interacting protein kinase 25 (514 aa).

Residues 21-281 (YEFGPLVGEG…IPEIMEMRWF (261 aa)) form the Protein kinase domain. ATP-binding positions include 27-35 (VGEGNFAKV) and lysine 50. Residue aspartate 149 is the Proton acceptor of the active site. An activation loop region spans residues 167–196 (DFGLSALADMERREAHLQTVCGTPLFLAPE). The interval 303–340 (GLDGEPELYDSDTDTIESSSSSESPTPVAGTPRGMHTS) is disordered. Residues 304–317 (LDGEPELYDSDTDT) are compositionally biased toward acidic residues. A compositionally biased stretch (low complexity) spans 318-329 (IESSSSSESPTP). An NAF domain is found at 323–395 (SSESPTPVAG…PSFDLSGLFE (73 aa)). Positions 398 to 427 (GERMRFVSGAPVADIIAKLQEIAGMVSFTA) are PPI.

Belongs to the protein kinase superfamily. CAMK Ser/Thr protein kinase family. SNF1 subfamily. The cofactor is Mn(2+).

It catalyses the reaction L-seryl-[protein] + ATP = O-phospho-L-seryl-[protein] + ADP + H(+). The enzyme catalyses L-threonyl-[protein] + ATP = O-phospho-L-threonyl-[protein] + ADP + H(+). Functionally, CIPK serine-threonine protein kinases interact with CBL proteins. Binding of a CBL protein to the regulatory NAF domain of CIPK protein lead to the activation of the kinase in a calcium-dependent manner. The chain is CBL-interacting protein kinase 25 (CIPK25) from Oryza sativa subsp. japonica (Rice).